Reading from the N-terminus, the 184-residue chain is Large ribosomal subunit protein uL6 (184 aa).

Belongs to the universal ribosomal protein uL6 family. In terms of assembly, part of the 50S ribosomal subunit.

This protein binds to the 23S rRNA, and is important in its secondary structure. It is located near the subunit interface in the base of the L7/L12 stalk, and near the tRNA binding site of the peptidyltransferase center. The polypeptide is Large ribosomal subunit protein uL6 (Thermococcus onnurineus (strain NA1)).